The sequence spans 145 residues: Large ribosomal subunit protein uL16 (145 aa).

The segment covering 1 to 17 (MLMPKRVKHRRVHRGRM) has biased composition (basic residues). The segment at 1–22 (MLMPKRVKHRRVHRGRMTGKAT) is disordered.

This sequence belongs to the universal ribosomal protein uL16 family. In terms of assembly, part of the 50S ribosomal subunit.

Functionally, binds 23S rRNA and is also seen to make contacts with the A and possibly P site tRNAs. This chain is Large ribosomal subunit protein uL16, found in Ruminiclostridium cellulolyticum (strain ATCC 35319 / DSM 5812 / JCM 6584 / H10) (Clostridium cellulolyticum).